A 130-amino-acid polypeptide reads, in one-letter code: Small ribosomal subunit protein uS8 (130 aa).

Belongs to the universal ribosomal protein uS8 family. As to quaternary structure, part of the 30S ribosomal subunit.

In terms of biological role, one of the primary rRNA binding proteins, it binds directly to 16S rRNA central domain where it helps coordinate assembly of the platform of the 30S subunit. The protein is Small ribosomal subunit protein uS8 of Methanocella arvoryzae (strain DSM 22066 / NBRC 105507 / MRE50).